The chain runs to 455 residues: Exodeoxyribonuclease 7 large subunit (455 aa).

Belongs to the XseA family. In terms of assembly, heterooligomer composed of large and small subunits.

The protein resides in the cytoplasm. It catalyses the reaction Exonucleolytic cleavage in either 5'- to 3'- or 3'- to 5'-direction to yield nucleoside 5'-phosphates.. In terms of biological role, bidirectionally degrades single-stranded DNA into large acid-insoluble oligonucleotides, which are then degraded further into small acid-soluble oligonucleotides. This is Exodeoxyribonuclease 7 large subunit from Escherichia coli O7:K1 (strain IAI39 / ExPEC).